The sequence spans 474 residues: PRAME family member 1 (474 aa).

An LRR 1; degenerate repeat occupies 97 to 124 (RWKLQVLDLRDVDENFWARWPGAWALSC). An LRR 2; degenerate repeat occupies 179 to 203 (HLCCSKLVNYLTPIKYLRKSLKIIY). The stretch at 204–230 (LNSIQELEIRNMSWPRLIRKLRCYLKE) is one LRR 3; degenerate repeat. The stretch at 231 to 265 (MKNLRKLVFSRCHHYTSDNELEGRLVAKFSSVFLR) is one LRR 4; degenerate repeat. 5 LRR repeats span residues 266–291 (LEHLQLLKIKLITFFSGHLEQLIRCL), 292–323 (QNPLENLELTYGYLLEEDMKCLSQYPSLGYLK), 324–342 (HLNLSYVLLFRISLEPLGA), 348–375 (AASLKTLILEGCQIHYSQLSAILPGLSR), and 376–400 (CSQLTTFYFGRNCMSIDALKDLLRH).

This sequence belongs to the PRAME family.

This is PRAME family member 1 from Homo sapiens (Human).